Here is a 453-residue protein sequence, read N- to C-terminus: Phosphoglucosamine mutase (453 aa).

The Phosphoserine intermediate role is filled by Ser-110. The Mg(2+) site is built by Ser-110, Asp-248, Asp-250, and Asp-252. Position 110 is a phosphoserine (Ser-110).

It belongs to the phosphohexose mutase family. The cofactor is Mg(2+). Post-translationally, activated by phosphorylation.

It carries out the reaction alpha-D-glucosamine 1-phosphate = D-glucosamine 6-phosphate. Functionally, catalyzes the conversion of glucosamine-6-phosphate to glucosamine-1-phosphate. This chain is Phosphoglucosamine mutase, found in Mycolicibacterium smegmatis (strain ATCC 700084 / mc(2)155) (Mycobacterium smegmatis).